The following is a 211-amino-acid chain: Potassium-transporting ATPase KdpC subunit (211 aa).

Residues 13–35 form a helical membrane-spanning segment; it reads VVTMVLTGLLYPLAVTGLAQLLF.

Belongs to the KdpC family. As to quaternary structure, the system is composed of three essential subunits: KdpA, KdpB and KdpC.

The protein localises to the cell membrane. Functionally, part of the high-affinity ATP-driven potassium transport (or Kdp) system, which catalyzes the hydrolysis of ATP coupled with the electrogenic transport of potassium into the cytoplasm. This subunit acts as a catalytic chaperone that increases the ATP-binding affinity of the ATP-hydrolyzing subunit KdpB by the formation of a transient KdpB/KdpC/ATP ternary complex. In Myxococcus xanthus, this protein is Potassium-transporting ATPase KdpC subunit.